Here is a 192-residue protein sequence, read N- to C-terminus: Imidazoleglycerol-phosphate dehydratase (192 aa).

The protein belongs to the imidazoleglycerol-phosphate dehydratase family.

The protein localises to the cytoplasm. It catalyses the reaction D-erythro-1-(imidazol-4-yl)glycerol 3-phosphate = 3-(imidazol-4-yl)-2-oxopropyl phosphate + H2O. Its pathway is amino-acid biosynthesis; L-histidine biosynthesis; L-histidine from 5-phospho-alpha-D-ribose 1-diphosphate: step 6/9. The chain is Imidazoleglycerol-phosphate dehydratase from Clostridioides difficile (strain 630) (Peptoclostridium difficile).